The chain runs to 448 residues: Phosphoglucosamine mutase (448 aa).

S104 functions as the Phosphoserine intermediate in the catalytic mechanism. Mg(2+)-binding residues include S104, D243, D245, and D247. The residue at position 104 (S104) is a Phosphoserine.

The protein belongs to the phosphohexose mutase family. It depends on Mg(2+) as a cofactor. Activated by phosphorylation.

It carries out the reaction alpha-D-glucosamine 1-phosphate = D-glucosamine 6-phosphate. Catalyzes the conversion of glucosamine-6-phosphate to glucosamine-1-phosphate. In Xylella fastidiosa (strain 9a5c), this protein is Phosphoglucosamine mutase.